The chain runs to 136 residues: Ribosome-binding factor A (136 aa).

Belongs to the RbfA family. Monomer. Binds 30S ribosomal subunits, but not 50S ribosomal subunits or 70S ribosomes.

Its subcellular location is the cytoplasm. In terms of biological role, one of several proteins that assist in the late maturation steps of the functional core of the 30S ribosomal subunit. Associates with free 30S ribosomal subunits (but not with 30S subunits that are part of 70S ribosomes or polysomes). Required for efficient processing of 16S rRNA. May interact with the 5'-terminal helix region of 16S rRNA. The chain is Ribosome-binding factor A from Photorhabdus laumondii subsp. laumondii (strain DSM 15139 / CIP 105565 / TT01) (Photorhabdus luminescens subsp. laumondii).